Here is a 441-residue protein sequence, read N- to C-terminus: MQVSLNPEWLARNNDEHKIRRNDHRSPFQRDRARILHSAAFRRLQAKTQVHGTSLNDFHRTRLTHSLEAAQIGTGIVAQIKLKQPEFRELLPSDSLIDSLCLAHDIGHPPYGHGGEIALNYMMRDHGGFEGNAQTFRIVTSLEPYTEHHGMNLSRRTLLGLLKYPALLSATRAAIPPPAVAHQRQLKAKDWSPAKGIYDCDLASLDWVLEPLCESDRELLGQMRAEPSSPKEHRKTRFKSLDCSIMELADDIAYGVHDLEDAIVLGMVTRAQWQEAAAAQLAECGDPWFEEHIAELSEMLFSGKHYVRKDAIGGIVNALLTSISVKPVEAPFHNELLAFNAYIEPHMGNALEVLKHFVSQYVIQIPQVQRFEYKGQQLIMDLFEALSADPERLLPQATGEKWRKAQEQDEGMRVICDYIAAMTDAYAQRLHQQLFSAQSHY.

The 194-residue stretch at 62 to 255 folds into the HD domain; the sequence is RLTHSLEAAQ…MELADDIAYG (194 aa).

Belongs to the dGTPase family. Type 2 subfamily.

This is Deoxyguanosinetriphosphate triphosphohydrolase-like protein 1 from Vibrio cholerae serotype O1 (strain ATCC 39315 / El Tor Inaba N16961).